We begin with the raw amino-acid sequence, 336 residues long: tRNA N6-adenosine threonylcarbamoyltransferase (336 aa).

Fe cation-binding residues include histidine 114 and histidine 118. Residues 136-140 (LVSGG), aspartate 169, glycine 182, aspartate 186, and asparagine 275 each bind substrate. Fe cation is bound at residue aspartate 301.

It belongs to the KAE1 / TsaD family. It depends on Fe(2+) as a cofactor.

It localises to the cytoplasm. It catalyses the reaction L-threonylcarbamoyladenylate + adenosine(37) in tRNA = N(6)-L-threonylcarbamoyladenosine(37) in tRNA + AMP + H(+). Required for the formation of a threonylcarbamoyl group on adenosine at position 37 (t(6)A37) in tRNAs that read codons beginning with adenine. Is involved in the transfer of the threonylcarbamoyl moiety of threonylcarbamoyl-AMP (TC-AMP) to the N6 group of A37, together with TsaE and TsaB. TsaD likely plays a direct catalytic role in this reaction. In Streptococcus pneumoniae (strain ATCC 700669 / Spain 23F-1), this protein is tRNA N6-adenosine threonylcarbamoyltransferase.